The sequence spans 154 residues: MKIYEGRLTAEGLKVGIIVSRFNEFITSKLLAGSIDCLKRHGAKEDNIEVCWVPGAFEIPVIAKKMASKGKYDAVICLGAVIRGATPHFDYVSSEVSKGVAHVSLDKEVPVIFGVLTTDTIEQAIERAGTKAGNKGYDAAMSAIEMSNLMKVLD.

5-amino-6-(D-ribitylamino)uracil-binding positions include Phe-22, 56–58 (AFE), and 80–82 (AVI). 85–86 (AT) serves as a coordination point for (2S)-2-hydroxy-3-oxobutyl phosphate. Residue His-88 is the Proton donor of the active site. Phe-113 is a 5-amino-6-(D-ribitylamino)uracil binding site. Arg-127 contributes to the (2S)-2-hydroxy-3-oxobutyl phosphate binding site.

It belongs to the DMRL synthase family.

It catalyses the reaction (2S)-2-hydroxy-3-oxobutyl phosphate + 5-amino-6-(D-ribitylamino)uracil = 6,7-dimethyl-8-(1-D-ribityl)lumazine + phosphate + 2 H2O + H(+). It participates in cofactor biosynthesis; riboflavin biosynthesis; riboflavin from 2-hydroxy-3-oxobutyl phosphate and 5-amino-6-(D-ribitylamino)uracil: step 1/2. In terms of biological role, catalyzes the formation of 6,7-dimethyl-8-ribityllumazine by condensation of 5-amino-6-(D-ribitylamino)uracil with 3,4-dihydroxy-2-butanone 4-phosphate. This is the penultimate step in the biosynthesis of riboflavin. The sequence is that of 6,7-dimethyl-8-ribityllumazine synthase from Clostridium botulinum (strain ATCC 19397 / Type A).